The chain runs to 89 residues: Small ribosomal subunit protein uS15 (89 aa).

The interval 1–22 (MPLSKEQKQEVMEKYKLHEHDT) is disordered.

It belongs to the universal ribosomal protein uS15 family. Part of the 30S ribosomal subunit. Forms a bridge to the 50S subunit in the 70S ribosome, contacting the 23S rRNA.

In terms of biological role, one of the primary rRNA binding proteins, it binds directly to 16S rRNA where it helps nucleate assembly of the platform of the 30S subunit by binding and bridging several RNA helices of the 16S rRNA. Forms an intersubunit bridge (bridge B4) with the 23S rRNA of the 50S subunit in the ribosome. The protein is Small ribosomal subunit protein uS15 of Natranaerobius thermophilus (strain ATCC BAA-1301 / DSM 18059 / JW/NM-WN-LF).